A 440-amino-acid chain; its full sequence is 5-hydroxytryptamine receptor 6 (440 aa).

Topologically, residues 1–27 (MVPEPGPSANSTPAWGAGPPSAPGGSG) are extracellular. A helical membrane pass occupies residues 28 to 52 (WVAAALCVVIALTAAANSLLIALIC). At 53–62 (TQPALRNTSN) the chain is on the cytoplasmic side. A helical membrane pass occupies residues 63 to 88 (FFLVSLFTSDLMVGLVVMPPAMLNAL). Residues 89 to 96 (YGRWVLAR) lie on the Extracellular side of the membrane. The chain crosses the membrane as a helical span at residues 97–122 (GLCLLWTAFDVMCCSASILNLCLISL). C99 and C180 form a disulfide bridge. D106 contributes to the serotonin binding site. Over 123 to 142 (DRYLLILSPLRYKLRMTPPR) the chain is Cytoplasmic. A helical transmembrane segment spans residues 143–167 (ALALVLGAWSLAALASFLPLLLGWH). The Extracellular segment spans residues 168-185 (ELGHARPPVPGQCRLLAS). Residues 186-209 (LPFVLVASGLTFFLPSGAICFTYC) form a helical membrane-spanning segment. The Cytoplasmic portion of the chain corresponds to 210–266 (RILLAARKQAVQVASLTTGMASQASETLQVPRTPRPGVESADSRRLATKHSRKALKA). A helical membrane pass occupies residues 267–293 (SLTLGILLGMFFVTWLPFFVANIVQAV). N288 provides a ligand contact to serotonin. Over 294-299 (CDCISP) the chain is Extracellular. The helical transmembrane segment at 300 to 323 (GLFDVLTWLGYCNSTMNPIIYPLF) threads the bilayer. Residues 324 to 440 (MRDFKRALGR…RPHPLGIPTN (117 aa)) are Cytoplasmic-facing. Positions 346–392 (ASLASPSLRTSHSGPRPGLSLQQVLPLPLPPDSDSDSDAGSGGSSGL) are disordered. The span at 347 to 358 (SLASPSLRTSHS) shows a compositional bias: polar residues. Residues 362-371 (PGLSLQQVLP) show a composition bias toward low complexity.

The protein belongs to the G-protein coupled receptor 1 family. Interacts with MTOR, RPTOR and NF1. Interacts with CDK5.

It is found in the cell membrane. In terms of biological role, G-protein coupled receptor for 5-hydroxytryptamine (serotonin), a biogenic hormone that functions as a neurotransmitter, a hormone and a mitogen. Also has a high affinity for tricyclic psychotropic drugs. Ligand binding causes a conformation change that triggers signaling via guanine nucleotide-binding proteins (G proteins) and modulates the activity of downstream effectors. HTR6 is coupled to G(s) G alpha proteins and mediates activation of adenylate cyclase activity. Controls pyramidal neurons migration during corticogenesis, through the regulation of CDK5 activity. Is an activator of mTOR signaling. The chain is 5-hydroxytryptamine receptor 6 (HTR6) from Pan troglodytes (Chimpanzee).